A 156-amino-acid polypeptide reads, in one-letter code: ATP synthase subunit b (156 aa).

A helical transmembrane segment spans residues 7–27 (LVAQMVVFFILWWVVAKFIWP).

The protein belongs to the ATPase B chain family. In terms of assembly, F-type ATPases have 2 components, F(1) - the catalytic core - and F(0) - the membrane proton channel. F(1) has five subunits: alpha(3), beta(3), gamma(1), delta(1), epsilon(1). F(0) has three main subunits: a(1), b(2) and c(10-14). The alpha and beta chains form an alternating ring which encloses part of the gamma chain. F(1) is attached to F(0) by a central stalk formed by the gamma and epsilon chains, while a peripheral stalk is formed by the delta and b chains.

The protein localises to the cell inner membrane. Its function is as follows. F(1)F(0) ATP synthase produces ATP from ADP in the presence of a proton or sodium gradient. F-type ATPases consist of two structural domains, F(1) containing the extramembraneous catalytic core and F(0) containing the membrane proton channel, linked together by a central stalk and a peripheral stalk. During catalysis, ATP synthesis in the catalytic domain of F(1) is coupled via a rotary mechanism of the central stalk subunits to proton translocation. Component of the F(0) channel, it forms part of the peripheral stalk, linking F(1) to F(0). The protein is ATP synthase subunit b of Ralstonia pickettii (strain 12J).